Consider the following 589-residue polypeptide: BTB/POZ domain and ankyrin repeat-containing protein NPR3 (589 aa).

A disordered region spans residues 1–25 (METSTISFSSSSPPSPPPPQPAPGD). The span at 13-22 (PPSPPPPQPA) shows a compositional bias: pro residues. In terms of domain architecture, BTB spans 52 to 137 (AEIVLASGGG…LYTGRLRSAP (86 aa)). Residues 140–154 (AAACLDDGCSHDACR) form a C2HC NPR-type zinc finger. Residues Cys143, Cys148, His150, and Cys153 each coordinate Zn(2+). ANK repeat units follow at residues 260-290 (KRVRNIHKALDSDDVDLVGMLLKESPVTLDD), 292-319 (FAIHYAAAYCEPKVLAELLKLESANVNL), and 323-352 (SGYTPLHMACMRREPDIIVSLIEKGASVLE). The salicylic acid-binding core (SBC) stretch occupies residues 382–521 (ERSKAYLCIG…LDKFLNEEST (140 aa)). A salicylate-binding site is contributed by Arg433. The disordered stretch occupies residues 555–589 (DKAAGAAISSSTSASSSPRYETKLRPGNKKGKLSR). The span at 558–571 (AGAAISSSTSASSS) shows a compositional bias: low complexity. Positions 580–589 (PGNKKGKLSR) are enriched in basic residues.

It belongs to the plant 'ANKYRIN-BTB/POZ' family. 'NPR1-like' subfamily. In terms of assembly, interacts with TGA2.1, TGA2.2, TGA2.3, LG2, TGAL1, TGAL4, NRR, RH1, RH2 and RH3.

Its subcellular location is the nucleus. Its pathway is protein modification; protein ubiquitination. Its function is as follows. Salicylic acid (SA)-binding substrate-specific adapter of an E3 ubiquitin-protein ligase complex (CUL3-RBX1-BTB) which mediates the ubiquitination and subsequent proteasomal degradation of target proteins. Involved in defense response against the bacterial blight disease caused by Xanthomonas oryzae pv. oryzae (Xoo). Plants expressing an NPR3/NH3 transgene driven by its native promoter show enhanced resistance to the Xoo pathogen, and exhibit elevated sensitivity to benzothiadiazole (BTH) treatment and enhanced induction of defense-related genes upon treatment with BTH. Intriguingly, constitutive over-expression of NPR3/NH3 with a ubiquitin promoter does not confer disease resistance to Xoo. This chain is BTB/POZ domain and ankyrin repeat-containing protein NPR3, found in Oryza sativa subsp. japonica (Rice).